Here is a 157-residue protein sequence, read N- to C-terminus: MALHVVLFQPEIPANTGNIARTCAATNTALHLIRPLGFSTDDKMLRRAGLDYWEFVNIHYYDSLDHFFQQNQNGDFYYITKFGKRYYTSYDFSDPSKEIFFIFGRETTGLPKELLAENEDRCLRIPMTENVRALNLSNTAAILVYEALRQQSFHGLS.

3 residues coordinate S-adenosyl-L-methionine: I79, G104, and I125.

The protein belongs to the class IV-like SAM-binding methyltransferase superfamily. RNA methyltransferase TrmH family. TrmL subfamily.

Its subcellular location is the cytoplasm. The catalysed reaction is cytidine(34) in tRNA + S-adenosyl-L-methionine = 2'-O-methylcytidine(34) in tRNA + S-adenosyl-L-homocysteine + H(+). It carries out the reaction 5-carboxymethylaminomethyluridine(34) in tRNA(Leu) + S-adenosyl-L-methionine = 5-carboxymethylaminomethyl-2'-O-methyluridine(34) in tRNA(Leu) + S-adenosyl-L-homocysteine + H(+). Functionally, could methylate the ribose at the nucleotide 34 wobble position in tRNA. This Geobacillus stearothermophilus (Bacillus stearothermophilus) protein is Putative tRNA (cytidine(34)-2'-O)-methyltransferase.